The sequence spans 133 residues: Small ribosomal subunit protein uS8 (133 aa).

The disordered stretch occupies residues 1–28 (MANHDPISDMLTRIRNASEKRHEKTKVP). Residues 16-26 (NASEKRHEKTK) show a composition bias toward basic and acidic residues.

This sequence belongs to the universal ribosomal protein uS8 family. Part of the 30S ribosomal subunit. Contacts proteins S5 and S12.

One of the primary rRNA binding proteins, it binds directly to 16S rRNA central domain where it helps coordinate assembly of the platform of the 30S subunit. The sequence is that of Small ribosomal subunit protein uS8 from Prochlorococcus marinus (strain NATL2A).